A 586-amino-acid polypeptide reads, in one-letter code: Septin-9 (586 aa).

Met1 is subject to N-acetylmethionine. Low complexity predominate over residues Met1–Gly14. 3 disordered regions span residues Met1–Thr49, Lys62–Thr108, and Arg134–Arg268. Ser22 and Ser30 each carry phosphoserine. Residues Thr38, Thr42, and Thr49 each carry the phosphothreonine modification. At Lys62 the chain carries N6-acetyllysine. Phosphoserine occurs at positions 82, 85, 89, and 96. A compositionally biased stretch (basic and acidic residues) spans Arg134–Glu151. Phosphothreonine is present on Thr142. A Phosphotyrosine modification is found at Tyr278. One can recognise a Septin-type G domain in the interval Gln295 to Glu567. Residues Gly305–Ser312 form a G1 motif region. A GTP-binding site is contributed by Gly305–Ser312. A phosphoserine mark is found at Ser327 and Ser332. Residues Thr339, Gly365, Lys445–Glu453, Gly501, and Arg516 contribute to the GTP site. The G3 motif stretch occupies residues Asp362 to Gly365. The G4 motif stretch occupies residues Ala444–Asp447.

Belongs to the TRAFAC class TrmE-Era-EngA-EngB-Septin-like GTPase superfamily. Septin GTPase family. In terms of assembly, septins polymerize into heterooligomeric protein complexes that form filaments, and associate with cellular membranes, actin filaments, and microtubules. GTPase activity is required for filament formation. Interacts with SEPTIN2, SEPTIN6, SEPTIN7, SEPTIN11 and SEPTIN14. Interacts with RTKN and ARHGEF18. In a mesenchymal cell line, Rho/RTKN signals cause disruption of wild-type septin filaments, but not of those containing isoform 2 variants HNA Trp-106 and Phe-111. In a mesenchymal cell line, isoform 2 variants HNA Trp-106 and Phe-111, but not wild type, form filaments with SEPTIN4. Widely expressed. Isoforms are differentially expressed in testes, kidney, liver heart, spleen, brain, peripheral blood leukocytes, skeletal muscle and kidney. Specific isoforms appear to demonstrate tissue specificity. Isoform 5 is the most highly expressed in fetal tissue. Isoform 1 is detected in all tissues except the brain and thymus, while isoform 2, isoform 3, and isoform 4 are detected at low levels in approximately half of the fetal tissues.

It localises to the cytoplasm. The protein resides in the cytoskeleton. Its function is as follows. Filament-forming cytoskeletal GTPase. May play a role in cytokinesis (Potential). May play a role in the internalization of 2 intracellular microbial pathogens, Listeria monocytogenes and Shigella flexneri. This chain is Septin-9, found in Homo sapiens (Human).